Consider the following 360-residue polypeptide: Outer mitochondrial transmembrane helix translocase (360 aa).

Over 1–15 (MVHGEAFSRPLSRNE) the chain is Mitochondrial intermembrane. The chain crosses the membrane as a helical span at residues 16–34 (VVGLIFRLTIFGAVTYFTI). Residues 35–360 (KWMVDAIDPT…QNVLMHVSLD (326 aa)) lie on the Cytoplasmic side of the membrane. 133–140 (GPPGCGKT) contacts ATP.

Belongs to the AAA ATPase family. MSP1 subfamily.

It localises to the mitochondrion outer membrane. The protein resides in the peroxisome membrane. The protein localises to the postsynaptic cell membrane. It catalyses the reaction [protein]-with a C-terminal TM segment(out) + ATP + H2O = [protein]-with a C-terminal TM segment(in) + ADP + phosphate + H(+). Outer mitochondrial translocase required to remove mislocalized tail-anchored transmembrane proteins on mitochondria. Specifically recognizes and binds tail-anchored transmembrane proteins: acts as a dislocase that mediates the ATP-dependent extraction of mistargeted tail-anchored transmembrane proteins from the mitochondrion outer membrane. Also plays a critical role in regulating the surface expression of AMPA receptors (AMPAR), thereby regulating synaptic plasticity and learning and memory. In Xenopus tropicalis (Western clawed frog), this protein is Outer mitochondrial transmembrane helix translocase.